The primary structure comprises 248 residues: Tryptophan synthase alpha chain (248 aa).

Active-site proton acceptor residues include Glu36 and Asp47.

The protein belongs to the TrpA family. As to quaternary structure, tetramer of two alpha and two beta chains.

It carries out the reaction (1S,2R)-1-C-(indol-3-yl)glycerol 3-phosphate + L-serine = D-glyceraldehyde 3-phosphate + L-tryptophan + H2O. The protein operates within amino-acid biosynthesis; L-tryptophan biosynthesis; L-tryptophan from chorismate: step 5/5. Functionally, the alpha subunit is responsible for the aldol cleavage of indoleglycerol phosphate to indole and glyceraldehyde 3-phosphate. The protein is Tryptophan synthase alpha chain of Pyrococcus abyssi (strain GE5 / Orsay).